We begin with the raw amino-acid sequence, 59 residues long: Large ribosomal subunit protein uL30 (59 aa).

This sequence belongs to the universal ribosomal protein uL30 family. Part of the 50S ribosomal subunit.

This Ectopseudomonas mendocina (strain ymp) (Pseudomonas mendocina) protein is Large ribosomal subunit protein uL30.